A 103-amino-acid polypeptide reads, in one-letter code: NADH-quinone oxidoreductase subunit K 2 (103 aa).

The next 3 helical transmembrane spans lie at Leu-7–Ile-27, Ile-31–Ala-51, and Ile-63–Ile-83.

The protein belongs to the complex I subunit 4L family. As to quaternary structure, NDH-1 is composed of 14 different subunits. Subunits NuoA, H, J, K, L, M, N constitute the membrane sector of the complex.

The protein localises to the cell inner membrane. The enzyme catalyses a quinone + NADH + 5 H(+)(in) = a quinol + NAD(+) + 4 H(+)(out). In terms of biological role, NDH-1 shuttles electrons from NADH, via FMN and iron-sulfur (Fe-S) centers, to quinones in the respiratory chain. The immediate electron acceptor for the enzyme in this species is believed to be ubiquinone. Couples the redox reaction to proton translocation (for every two electrons transferred, four hydrogen ions are translocated across the cytoplasmic membrane), and thus conserves the redox energy in a proton gradient. The protein is NADH-quinone oxidoreductase subunit K 2 of Koribacter versatilis (strain Ellin345).